Reading from the N-terminus, the 1260-residue chain is Agglutinin-like protein 1 (1260 aa).

The signal sequence occupies residues 1-17; the sequence is MLQQFTLLFLYLSIASA. 4 disulfide bridges follow: Cys73/Cys150, Cys96/Cys112, Cys205/Cys298, and Cys227/Cys256. ALS repeat units follow at residues 365-396, 401-432, and 438-469; these read TTIT…VDVP, TTVT…VQVP, and VSTT…IREP. A glycan (N-linked (GlcNAc...) asparagine) is linked at Asn471. An ALS 4 repeat occupies 474–505; the sequence is VTTTEYWSQSFATTTTVTAPPGETDTVIIREP. An N-linked (GlcNAc...) asparagine glycan is attached at Asn507. The ALS 5 repeat unit spans residues 510–541; the sequence is VTTTEYWSQSYATTTTVTAPPGGTDTVLIREP. N-linked (GlcNAc...) asparagine glycosylation occurs at Asn543. An ALS 6 repeat occupies 546 to 577; the sequence is VTTTEYWSQSYATTTTVTAPPGGTDTVIIREP. Residue Asn579 is glycosylated (N-linked (GlcNAc...) asparagine). The ALS 7 repeat unit spans residues 582-613; that stretch reads VTTTEYWSQSYATTTTITAPPGETDTVIIREP. Asn615 carries N-linked (GlcNAc...) asparagine glycosylation. One copy of the ALS 8 repeat lies at 618-649; that stretch reads VTTTEYWSQSYATTTTVTAPPGGTDTVLIREP. Asn651 carries N-linked (GlcNAc...) asparagine glycosylation. The stretch at 654-685 is one ALS 9 repeat; it reads VTTTEYWSQSYATTTTVTAPPGGTDTVLIREP. An N-linked (GlcNAc...) asparagine glycan is attached at Asn687. An ALS 10 repeat occupies 690-721; it reads VTTTEYWSQSYATTTTVTAPPGGTDTVIIREP. An N-linked (GlcNAc...) asparagine glycan is attached at Asn723. The stretch at 726 to 757 is one ALS 11 repeat; sequence VTTTEYWSQSYATTTTVTAPPGGTDTVIIREP. N-linked (GlcNAc...) asparagine glycosylation is present at Asn759. The ALS 12 repeat unit spans residues 762–791; sequence VTTTEYWSQSFATTTTVTAPPGGTDTVIIY. Asn820, Asn886, Asn918, and Asn973 each carry an N-linked (GlcNAc...) asparagine glycan. Polar residues-rich tracts occupy residues 896–918 and 964–979; these read PTAS…SSDN and KVTF…GTHD. 2 disordered regions span residues 896–924 and 954–1226; these read PTAS…KSGV and SIPS…SSSP. The span at 980 to 995 shows a compositional bias: low complexity; that stretch reads SQSTSTEIEIVTTSST. Polar residues predominate over residues 1002 to 1062; that stretch reads VSSNTDLTSE…PTVATSTLAS (61 aa). 2 N-linked (GlcNAc...) asparagine glycosylation sites follow: Asn1045 and Asn1068. Residues 1073–1090 show a composition bias toward polar residues; the sequence is HESASTSLKPSMGENSGL. Positions 1091 to 1110 are enriched in low complexity; sequence TTSTEIEATTTSPTEAPSPA. Polar residues predominate over residues 1111 to 1154; the sequence is VSSGTDVTTEPTDTREQPTTLSTTSKTNSESVATTQATNENGGK. Composition is skewed to low complexity over residues 1155-1176 and 1197-1226; these read SPST…SANS and SHST…SSSP. Residue Gly1238 is the site of GPI-anchor amidated glycine attachment. Positions 1239–1260 are cleaved as a propeptide — removed in mature form; it reads SGSIIQHSTWLYGLITLLSLFI.

The protein belongs to the ALS family. Post-translationally, the GPI-anchor is attached to the protein in the endoplasmic reticulum and serves to target the protein to the cell surface. There, the glucosamine-inositol phospholipid moiety is cleaved off and the GPI-modified mannoprotein is covalently attached via its lipidless GPI glycan remnant to the 1,6-beta-glucan of the outer cell wall layer.

Its subcellular location is the cell membrane. It is found in the secreted. The protein resides in the cell wall. In terms of biological role, major cell surface adhesion protein which mediates both yeast-to-host tissue adherence and yeast aggregation. Acts as a downstream effector of the EFG1 regulatory pathway. Required for rapamycin-induced aggregation of C.albicans. Binds glycans and mediates adherence to endothelial and epithelial cells, thereby playing an important role in the pathogenesis of C.albicans infections. This chain is Agglutinin-like protein 1 (ALS1), found in Candida albicans (strain SC5314 / ATCC MYA-2876) (Yeast).